Consider the following 420-residue polypeptide: Glucose-1-phosphate adenylyltransferase (420 aa).

Alpha-D-glucose 1-phosphate contacts are provided by residues Tyr107, Gly172, 187–188, and Ser205; that span reads EK.

This sequence belongs to the bacterial/plant glucose-1-phosphate adenylyltransferase family. In terms of assembly, homotetramer.

It carries out the reaction alpha-D-glucose 1-phosphate + ATP + H(+) = ADP-alpha-D-glucose + diphosphate. It participates in glycan biosynthesis; glycogen biosynthesis. Involved in the biosynthesis of ADP-glucose, a building block required for the elongation reactions to produce glycogen. Catalyzes the reaction between ATP and alpha-D-glucose 1-phosphate (G1P) to produce pyrophosphate and ADP-Glc. The sequence is that of Glucose-1-phosphate adenylyltransferase from Rhizobium meliloti (strain 1021) (Ensifer meliloti).